Here is a 332-residue protein sequence, read N- to C-terminus: Putative pumilio homolog 20 (332 aa).

The region spanning 1–332 (MAHQLRFAAA…NIASILNSIR (332 aa)) is the PUM-HD domain. Pumilio repeat units follow at residues 89-124 (SDPD…FAAA) and 125-159 (ILRR…AMYE). One copy of the Pumilio 3; degenerate repeat lies at 160–191 (HILHYASHIARDKHGNLALNDIITDAYRNKLF). 3 Pumilio repeats span residues 192–228 (DVIA…NIVV), 229–266 (SLRG…ELME), and 267–303 (CEGD…DLFW).

Its subcellular location is the cytoplasm. Functionally, sequence-specific RNA-binding protein that regulates translation and mRNA stability by binding the 3'-UTR of target mRNAs. The chain is Putative pumilio homolog 20 (APUM20) from Arabidopsis thaliana (Mouse-ear cress).